Reading from the N-terminus, the 351-residue chain is Methylthioribose-1-phosphate isomerase (351 aa).

Substrate-binding positions include 55–57 (RGA), R95, and Q202. The active-site Proton donor is D243. Position 253–254 (253–254 (NK)) interacts with substrate.

Belongs to the eIF-2B alpha/beta/delta subunits family. MtnA subfamily.

It catalyses the reaction 5-(methylsulfanyl)-alpha-D-ribose 1-phosphate = 5-(methylsulfanyl)-D-ribulose 1-phosphate. It functions in the pathway amino-acid biosynthesis; L-methionine biosynthesis via salvage pathway; L-methionine from S-methyl-5-thio-alpha-D-ribose 1-phosphate: step 1/6. Catalyzes the interconversion of methylthioribose-1-phosphate (MTR-1-P) into methylthioribulose-1-phosphate (MTRu-1-P). In Marinobacter nauticus (strain ATCC 700491 / DSM 11845 / VT8) (Marinobacter aquaeolei), this protein is Methylthioribose-1-phosphate isomerase.